The chain runs to 60 residues: Prophage outer membrane lipoprotein RzoD (60 aa).

The N-terminal stretch at methionine 1–glycine 19 is a signal peptide. A lipid anchor (N-palmitoyl cysteine) is attached at cysteine 20. Residue cysteine 20 is the site of S-diacylglycerol cysteine attachment.

The protein belongs to the lambdalikevirus o-spanin family. As to quaternary structure, homodimer; disulfide-linked. Interacts (via C-terminus) with RZ (via C-terminus). Part of the spanin complex which spans the entire periplasmic space. The spanin complex is composed of spanin, inner membrane subunit and spanin, outer membrane subunit.

It is found in the cell outer membrane. Component of the spanin complex that disrupts the outer membrane and causes cell lysis during virus exit. The spanin complex conducts the final step in cell lysis by disrupting the outer membrane after holin and endolysin action have permeabilized the inner membrane and degraded the host peptidoglycans. This chain is Prophage outer membrane lipoprotein RzoD (rzoD), found in Escherichia coli (strain K12).